The sequence spans 200 residues: Probable nicotinate-nucleotide adenylyltransferase (200 aa).

It belongs to the NadD family.

The enzyme catalyses nicotinate beta-D-ribonucleotide + ATP + H(+) = deamido-NAD(+) + diphosphate. The protein operates within cofactor biosynthesis; NAD(+) biosynthesis; deamido-NAD(+) from nicotinate D-ribonucleotide: step 1/1. Catalyzes the reversible adenylation of nicotinate mononucleotide (NaMN) to nicotinic acid adenine dinucleotide (NaAD). In Clostridium botulinum (strain Alaska E43 / Type E3), this protein is Probable nicotinate-nucleotide adenylyltransferase.